We begin with the raw amino-acid sequence, 1083 residues long: UPF0182 protein BAD_0641 (1083 aa).

A disordered region spans residues 1–72; sequence MSFFDMFGPM…TSKPNRPRKP (72 aa). 7 helical membrane passes run 78–98, 125–145, 178–198, 239–259, 281–301, 325–345, and 372–392; these read IFIG…ALAQ, LWLA…TLAI, IAVV…NANW, SLLL…MGGI, IGIW…LGVF, VTFI…LWIM, and VAIA…PVLL. The disordered stretch occupies residues 976–1061; the sequence is DSGASAGDAE…SDAAMKKGDW (86 aa). 2 stretches are compositionally biased toward basic and acidic residues: residues 991–1013 and 1050–1060; these read TDDK…DGKQ and KDSDAAMKKGD.

It belongs to the UPF0182 family.

It is found in the cell membrane. In Bifidobacterium adolescentis (strain ATCC 15703 / DSM 20083 / NCTC 11814 / E194a), this protein is UPF0182 protein BAD_0641.